The chain runs to 234 residues: tRNA1(Val) (adenine(37)-N6)-methyltransferase (234 aa).

It belongs to the methyltransferase superfamily. tRNA (adenine-N(6)-)-methyltransferase family.

Its subcellular location is the cytoplasm. It catalyses the reaction adenosine(37) in tRNA1(Val) + S-adenosyl-L-methionine = N(6)-methyladenosine(37) in tRNA1(Val) + S-adenosyl-L-homocysteine + H(+). Its function is as follows. Specifically methylates the adenine in position 37 of tRNA(1)(Val) (anticodon cmo5UAC). This is tRNA1(Val) (adenine(37)-N6)-methyltransferase from Aliivibrio salmonicida (strain LFI1238) (Vibrio salmonicida (strain LFI1238)).